Here is an 825-residue protein sequence, read N- to C-terminus: Phenylalanine--tRNA ligase beta subunit (825 aa).

In terms of domain architecture, tRNA-binding spans 39 to 154; it reads RTWADGVVLG…EAHPLGSDVR (116 aa). Positions 411-506 constitute a B5 domain; the sequence is PLERTLKLRL…RLYGYDRFSE (96 aa). Residues Asp484, Asp490, Glu493, and Glu494 each contribute to the Mg(2+) site. The 94-residue stretch at 731–824 folds into the FDX-ACB domain; sequence SPFPAADRDI…LATQFPVTLR (94 aa).

It belongs to the phenylalanyl-tRNA synthetase beta subunit family. Type 1 subfamily. Tetramer of two alpha and two beta subunits. It depends on Mg(2+) as a cofactor.

It localises to the cytoplasm. The enzyme catalyses tRNA(Phe) + L-phenylalanine + ATP = L-phenylalanyl-tRNA(Phe) + AMP + diphosphate + H(+). This chain is Phenylalanine--tRNA ligase beta subunit, found in Synechococcus sp. (strain JA-2-3B'a(2-13)) (Cyanobacteria bacterium Yellowstone B-Prime).